A 546-amino-acid chain; its full sequence is MALRVPKASGPQLFREGYRIMQGVEDAVIRNCNAIRELSEITRTSLGPNGKNKIVVNHLQQTFLTNDAATIIRELEVIHPAAKLVVDATQQQENELGDAANFVVVFTGELLAKAENMIRMGLTPLEIAKGYEMALSHTMEVLEEICADKIETVESEKELIKAIRTCISSKQYGNEDFLSDLVAKAILTVLPKDPSKFNVDNIRVVKIMGSSLYNSQVVKGMVFPREPEGTVTRSKEAKVAVFSCPLDISQTETKGTVLLHNAQEMLDFSKGEENLIESHIKEIYDAGVRVVVTSGNVNDLVLHYLNRFEILVIRVPSKFELRRLCRVVGATPLARMGVPMPEEMGSVDVVETIEIGGDRVTVFRQVEDITRTATIVLRGATKTYLDDLERAIDDGVNIVKALVKDNRLIFGAGASDMQLCIRLISVGEKTPGIYQHAIKQYGEAFEVVPRTISENAGLDPTDVISKLYAAHHKENGESIGVDVECENDGTLDAKEAGIFDVLLAKKSAIRLATETVLTVLNVDQVVMSKPAGGPKPPGPNPHWDDD.

A disordered region spans residues 527-546; sequence MSKPAGGPKPPGPNPHWDDD.

The protein belongs to the TCP-1 chaperonin family. In terms of assembly, heterooligomeric complex of about 850 to 900 kDa that forms two stacked rings, 12 to 16 nm in diameter.

It is found in the cytoplasm. Functionally, molecular chaperone; assists the folding of proteins upon ATP hydrolysis. Known to play a role, in vitro, in the folding of actin and tubulin. The protein is Probable T-complex protein 1 subunit theta (cct8) of Schizosaccharomyces pombe (strain 972 / ATCC 24843) (Fission yeast).